Here is a 543-residue protein sequence, read N- to C-terminus: uncharacterized protein (543 aa).

The TRAM domain maps to 1–59; it reads MLKKNDIVEVEIVDLTHEGAGVAKVDGLVFFVENALPSEKILMRVLKVNKKIGFGKVEK. Residues Q283, Y312, E333, and D381 each contribute to the S-adenosyl-L-methionine site. Catalysis depends on C408, which acts as the Nucleophile.

This sequence belongs to the class I-like SAM-binding methyltransferase superfamily. RNA M5U methyltransferase family.

This is an uncharacterized protein from Streptococcus pneumoniae (strain ATCC BAA-255 / R6).